Here is a 670-residue protein sequence, read N- to C-terminus: E3 ubiquitin-protein ligase MAG2 (670 aa).

Disordered stretches follow at residues 1–84 and 124–145; these read MVEP…TSTR and EVER…RDEH. Over residues 20–39 the composition is skewed to polar residues; it reads DTLNATSNSSKQGVSNNKRN. Over residues 51–66 the composition is skewed to basic and acidic residues; the sequence is SDGRDNAHNYHGEGRR. The RING-type zinc-finger motif lies at 195 to 250; the sequence is CSICLSEEPVAPRMVTCGHIFCLSCLLNFFSIEETVKNKETGYSKKKKYKECPLCG. Residues 609–670 are disordered; sequence TEDEKASKEN…LFSSNHQALG (62 aa). Basic and acidic residues predominate over residues 610-622; that stretch reads EDEKASKENKEFQ. Residues 637–649 are compositionally biased toward low complexity; it reads VTDSTDSPPTSNG.

Belongs to the RNF10 family.

The protein resides in the cytoplasm. The catalysed reaction is S-ubiquitinyl-[E2 ubiquitin-conjugating enzyme]-L-cysteine + [acceptor protein]-L-lysine = [E2 ubiquitin-conjugating enzyme]-L-cysteine + N(6)-ubiquitinyl-[acceptor protein]-L-lysine.. Its pathway is protein modification; protein ubiquitination. E3 ubiquitin-protein ligase involved in the degradation of non-functional 18S rRNAs in response to stalled ribosomes. Catalyzes monoubiquitination of RPS3/uS3 in response to stalled ribosomes, initiating a HEL2-dependent response that activates the degradation of non-functional 18S rRNAs. This Saccharomyces cerevisiae (strain ATCC 204508 / S288c) (Baker's yeast) protein is E3 ubiquitin-protein ligase MAG2.